The sequence spans 438 residues: MSTIVALATAPMNCAIHIIRVSGPKAFEIINKISTIKIKKETFKIWYTILKDDNQILDEVLINTFVAPKTFTGEDLVEINCHGGIVVANLIIKTLIKYGCQPAQRGEFSRRALLNKKMDLSKIEAINNLVNAKNELSVKGVIGALLGRVSQSIAEFRHELFMIIGQIEVNIDYPEYDDVEQVDAIILKQRLLSLDKKITKIIDQSKKFLPINKGIRVLIIGKPNVGKSTLLNALCNEQKAIVTDIPGTTRDVIESSINIDNITLNILDTAGIHLTNDFVENLGINKAKALIDKVDLILYLIPANEQQDLELYDLIKKQKHLLVYTKKDLVDQYDDKQIYINAKNNDIQSLIDEIKKLFYVQEFDNANIDVLQSQRQIGILENVHYLINNAILNLEKGDTLDLIVADLEFCNLRLNELLGISSEYDFLDDLFKNFCIGK.

3 residues coordinate (6S)-5-formyl-5,6,7,8-tetrahydrofolate: R20, E78, and K117. Positions 214–359 (GIRVLIIGKP…LIDEIKKLFY (146 aa)) constitute a TrmE-type G domain. Position 224 (N224) interacts with K(+). GTP contacts are provided by residues 224–229 (NVGKST), 243–249 (TDIPGTT), and 268–271 (DTAG). Mg(2+) is bound at residue S228. T243, I245, and T248 together coordinate K(+). T249 is a Mg(2+) binding site. K438 contacts (6S)-5-formyl-5,6,7,8-tetrahydrofolate.

It belongs to the TRAFAC class TrmE-Era-EngA-EngB-Septin-like GTPase superfamily. TrmE GTPase family. As to quaternary structure, homodimer. Heterotetramer of two MnmE and two MnmG subunits. K(+) is required as a cofactor.

It localises to the cytoplasm. Functionally, exhibits a very high intrinsic GTPase hydrolysis rate. Involved in the addition of a carboxymethylaminomethyl (cmnm) group at the wobble position (U34) of certain tRNAs, forming tRNA-cmnm(5)s(2)U34. The polypeptide is tRNA modification GTPase MnmE (Ureaplasma parvum serovar 3 (strain ATCC 27815 / 27 / NCTC 11736)).